The chain runs to 319 residues: Glutamyl-Q tRNA(Asp) synthetase (319 aa).

L-glutamate contacts are provided by residues 23–27 and Glu59; that span reads RFAPS. A 'HIGH' region motif is present at residues 26 to 36; the sequence is PSPSGPLHAGS. 4 residues coordinate Zn(2+): Cys115, Cys117, Tyr139, and Cys143. Positions 197 and 215 each coordinate L-glutamate. The short motif at 254 to 258 is the 'KMSKS' region element; that stretch reads KLSKQ. Lys257 contributes to the ATP binding site.

This sequence belongs to the class-I aminoacyl-tRNA synthetase family. GluQ subfamily. Zn(2+) serves as cofactor.

In terms of biological role, catalyzes the tRNA-independent activation of glutamate in presence of ATP and the subsequent transfer of glutamate onto a tRNA(Asp). Glutamate is transferred on the 2-amino-5-(4,5-dihydroxy-2-cyclopenten-1-yl) moiety of the queuosine in the wobble position of the QUC anticodon. This chain is Glutamyl-Q tRNA(Asp) synthetase, found in Bordetella bronchiseptica (strain ATCC BAA-588 / NCTC 13252 / RB50) (Alcaligenes bronchisepticus).